Here is a 126-residue protein sequence, read N- to C-terminus: Small ribosomal subunit protein eS24 (126 aa).

Positions 98–126 are disordered; that stretch reads LYTKPQTSRKQRKEKKNRLKKAGKKTAKK. The segment covering 104 to 126 has biased composition (basic residues); the sequence is TSRKQRKEKKNRLKKAGKKTAKK.

The protein belongs to the eukaryotic ribosomal protein eS24 family.

This chain is Small ribosomal subunit protein eS24 (rps24), found in Dictyostelium discoideum (Social amoeba).